We begin with the raw amino-acid sequence, 793 residues long: Kinesin-like protein KIN-14C (793 aa).

The disordered stretch occupies residues 1-43 (MASRNQNRPPRSPNAKKEGLGGISFDKRRKVETQGGTGRRQAF). The segment at 1 to 69 (MASRNQNRPP…IEECGKVDFT (69 aa)) is globular. The span at 15–32 (AKKEGLGGISFDKRRKVE) shows a compositional bias: basic and acidic residues. The stretch at 120-375 (KENLKVSLES…EQQLAIANER (256 aa)) forms a coiled coil. Residues 431–772 (NIRVFCRVRP…LRFAARVNAC (342 aa)) enclose the Kinesin motor domain. 516-523 (GQTGSGKT) contributes to the ATP binding site.

This sequence belongs to the TRAFAC class myosin-kinesin ATPase superfamily. Kinesin family. KIN-14 subfamily.

The protein resides in the cytoplasm. It localises to the cytoskeleton. Its subcellular location is the spindle. It is found in the phragmoplast. The protein localises to the chromosome. The protein resides in the centromere. It localises to the kinetochore. Functionally, kinesin that supports microtubule movement in an ATP-dependent manner and has a minus-end directed polarity. Plays a crucial role in spindle morphogenesis in male meiosis. In mitosis, is required for normal microtubule accumulation at the spindle poles during prophase and may play a role in spindle assembly during prometaphase. The sequence is that of Kinesin-like protein KIN-14C from Arabidopsis thaliana (Mouse-ear cress).